The sequence spans 417 residues: Queuine tRNA-ribosyltransferase accessory subunit 2 (417 aa).

Zn(2+)-binding residues include cysteine 324, cysteine 326, cysteine 329, and histidine 355.

Belongs to the queuine tRNA-ribosyltransferase family. QTRT2 subfamily. As to quaternary structure, heterodimer of a catalytic subunit and an accessory subunit. It depends on Zn(2+) as a cofactor.

Its subcellular location is the cytoplasm. Non-catalytic subunit of the queuine tRNA-ribosyltransferase (TGT) that catalyzes the base-exchange of a guanine (G) residue with queuine (Q) at position 34 (anticodon wobble position) in tRNAs with GU(N) anticodons (tRNA-Asp, -Asn, -His and -Tyr), resulting in the hypermodified nucleoside queuosine (7-(((4,5-cis-dihydroxy-2-cyclopenten-1-yl)amino)methyl)-7-deazaguanosine). The sequence is that of Queuine tRNA-ribosyltransferase accessory subunit 2 from Drosophila pseudoobscura pseudoobscura (Fruit fly).